The following is a 171-amino-acid chain: NADH-ubiquinone oxidoreductase chain 6 (171 aa).

A run of 5 helical transmembrane segments spans residues 1 to 21, 25 to 44, 49 to 71, 85 to 105, and 150 to 170; these read MYVM…ISSK, IYGG…IIMG, FMGL…YTTA, VVIW…VAWM, and WFAA…IEII.

This sequence belongs to the complex I subunit 6 family. As to quaternary structure, core subunit of respiratory chain NADH dehydrogenase (Complex I) which is composed of 45 different subunits.

It is found in the mitochondrion inner membrane. It catalyses the reaction a ubiquinone + NADH + 5 H(+)(in) = a ubiquinol + NAD(+) + 4 H(+)(out). In terms of biological role, core subunit of the mitochondrial membrane respiratory chain NADH dehydrogenase (Complex I) which catalyzes electron transfer from NADH through the respiratory chain, using ubiquinone as an electron acceptor. Essential for the catalytic activity and assembly of complex I. This Lemur catta (Ring-tailed lemur) protein is NADH-ubiquinone oxidoreductase chain 6 (MT-ND6).